The primary structure comprises 309 residues: uncharacterized protein (309 aa).

A run of 6 helical transmembrane segments spans residues 28–48, 73–93, 113–133, 157–177, 220–240, and 259–279; these read IIAL…IMKP, MMLN…VIGW, LIVI…LLPI, ITAF…YFHS, FVVI…AALF, and IFAV…ILIL.

It is found in the cell membrane. This is an uncharacterized protein from Bacillus subtilis (strain 168).